Consider the following 126-residue polypeptide: Ribosome-binding factor A (126 aa).

This sequence belongs to the RbfA family. As to quaternary structure, monomer. Binds 30S ribosomal subunits, but not 50S ribosomal subunits or 70S ribosomes.

It is found in the cytoplasm. In terms of biological role, one of several proteins that assist in the late maturation steps of the functional core of the 30S ribosomal subunit. Associates with free 30S ribosomal subunits (but not with 30S subunits that are part of 70S ribosomes or polysomes). Required for efficient processing of 16S rRNA. May interact with the 5'-terminal helix region of 16S rRNA. The sequence is that of Ribosome-binding factor A from Thermosynechococcus vestitus (strain NIES-2133 / IAM M-273 / BP-1).